The primary structure comprises 251 residues: Imidazole glycerol phosphate synthase subunit HisF (251 aa).

Residues Asp-11 and Asp-130 contribute to the active site.

Belongs to the HisA/HisF family. As to quaternary structure, heterodimer of HisH and HisF.

The protein localises to the cytoplasm. It carries out the reaction 5-[(5-phospho-1-deoxy-D-ribulos-1-ylimino)methylamino]-1-(5-phospho-beta-D-ribosyl)imidazole-4-carboxamide + L-glutamine = D-erythro-1-(imidazol-4-yl)glycerol 3-phosphate + 5-amino-1-(5-phospho-beta-D-ribosyl)imidazole-4-carboxamide + L-glutamate + H(+). The protein operates within amino-acid biosynthesis; L-histidine biosynthesis; L-histidine from 5-phospho-alpha-D-ribose 1-diphosphate: step 5/9. Its function is as follows. IGPS catalyzes the conversion of PRFAR and glutamine to IGP, AICAR and glutamate. The HisF subunit catalyzes the cyclization activity that produces IGP and AICAR from PRFAR using the ammonia provided by the HisH subunit. In Flavobacterium psychrophilum (strain ATCC 49511 / DSM 21280 / CIP 103535 / JIP02/86), this protein is Imidazole glycerol phosphate synthase subunit HisF.